We begin with the raw amino-acid sequence, 446 residues long: Probable glucan endo-1,3-beta-glucosidase eglC (446 aa).

The first 18 residues, 1–18 (MQFTHLVALALALATSEA), serve as a signal peptide directing secretion. Residue Glu128 is the Proton donor of the active site. Asn183 is a glycosylation site (N-linked (GlcNAc...) asparagine). Glu239 functions as the Nucleophile in the catalytic mechanism. Residues Asn364 and Asn370 are each glycosylated (N-linked (GlcNAc...) asparagine). Residues 393 to 416 (SSGAGASGASGQSSSSTGSSSAPS) are disordered. The span at 401 to 416 (ASGQSSSSTGSSSAPS) shows a compositional bias: low complexity. Residue Asn423 is the site of GPI-anchor amidated asparagine attachment. Residues 424-446 (AASGLSGSIFGAVVAVCLALAAL) constitute a propeptide, removed in mature form.

Belongs to the glycosyl hydrolase 17 family. In terms of processing, the GPI-anchor is attached to the protein in the endoplasmic reticulum and serves to target the protein to the cell surface. There, the glucosamine-inositol phospholipid moiety is cleaved off and the GPI-modified mannoprotein is covalently attached via its lipidless GPI glycan remnant to the 1,6-beta-glucan of the outer cell wall layer.

The protein localises to the cell membrane. Its subcellular location is the secreted. It is found in the cell wall. The enzyme catalyses Hydrolysis of (1-&gt;3)-beta-D-glucosidic linkages in (1-&gt;3)-beta-D-glucans.. Functionally, glucanases play a role in cell expansion during growth, in cell-cell fusion during mating, and in spore release during sporulation. This enzyme may be involved in beta-glucan degradation and also function biosynthetically as a transglycosylase. The protein is Probable glucan endo-1,3-beta-glucosidase eglC (eglC) of Aspergillus fumigatus (strain ATCC MYA-4609 / CBS 101355 / FGSC A1100 / Af293) (Neosartorya fumigata).